Reading from the N-terminus, the 236-residue chain is Small ribosomal subunit protein uS2c (236 aa).

It belongs to the universal ribosomal protein uS2 family.

It is found in the plastid. The protein localises to the chloroplast. This chain is Small ribosomal subunit protein uS2c (rps2), found in Phaseolus vulgaris (Kidney bean).